We begin with the raw amino-acid sequence, 200 residues long: Small ribosomal subunit protein uS4 (200 aa).

Residues 106–170 enclose the S4 RNA-binding domain; the sequence is RRLQTIVFKK…SPIANELHPI (65 aa). The disordered stretch occupies residues 178–200; it reads AERVKEEAEKEAAASEDGGEQDE. Basic and acidic residues predominate over residues 179–190; it reads ERVKEEAEKEAA.

The protein belongs to the universal ribosomal protein uS4 family. As to quaternary structure, part of the 30S ribosomal subunit. Contacts protein S5. The interaction surface between S4 and S5 is involved in control of translational fidelity.

One of the primary rRNA binding proteins, it binds directly to 16S rRNA where it nucleates assembly of the body of the 30S subunit. Its function is as follows. With S5 and S12 plays an important role in translational accuracy. The polypeptide is Small ribosomal subunit protein uS4 (Thermoplasma volcanium (strain ATCC 51530 / DSM 4299 / JCM 9571 / NBRC 15438 / GSS1)).